We begin with the raw amino-acid sequence, 284 residues long: 4-diphosphocytidyl-2-C-methyl-D-erythritol kinase (284 aa).

The active site involves lysine 22. Residue 104-114 (PVGAGLGGASS) participates in ATP binding. Residue aspartate 146 is part of the active site.

The protein belongs to the GHMP kinase family. IspE subfamily.

It carries out the reaction 4-CDP-2-C-methyl-D-erythritol + ATP = 4-CDP-2-C-methyl-D-erythritol 2-phosphate + ADP + H(+). The protein operates within isoprenoid biosynthesis; isopentenyl diphosphate biosynthesis via DXP pathway; isopentenyl diphosphate from 1-deoxy-D-xylulose 5-phosphate: step 3/6. In terms of biological role, catalyzes the phosphorylation of the position 2 hydroxy group of 4-diphosphocytidyl-2C-methyl-D-erythritol. This chain is 4-diphosphocytidyl-2-C-methyl-D-erythritol kinase, found in Hydrogenobaculum sp. (strain Y04AAS1).